The chain runs to 295 residues: Acetylglutamate kinase (295 aa).

Substrate-binding positions include 67–68, arginine 89, and asparagine 191; that span reads GG.

It belongs to the acetylglutamate kinase family. ArgB subfamily.

The protein localises to the cytoplasm. The enzyme catalyses N-acetyl-L-glutamate + ATP = N-acetyl-L-glutamyl 5-phosphate + ADP. The protein operates within amino-acid biosynthesis; L-arginine biosynthesis; N(2)-acetyl-L-ornithine from L-glutamate: step 2/4. Catalyzes the ATP-dependent phosphorylation of N-acetyl-L-glutamate. The chain is Acetylglutamate kinase from Nitrosomonas eutropha (strain DSM 101675 / C91 / Nm57).